We begin with the raw amino-acid sequence, 165 residues long: Copper-resistant cuproprotein CopI (165 aa).

A signal peptide spans Met1–Ala23. Residues Ala25–Asp42 are compositionally biased toward basic and acidic residues. The interval Ala25–Asp50 is disordered. Residues His93, Cys148, His153, and Met158 each coordinate Cu(2+).

This sequence belongs to the CopI family. As to quaternary structure, monomer.

The protein resides in the periplasm. Functionally, involved in copper tolerance. Required for copper resistance under both aerobic and anaerobic photosynthetic growth conditions. Binds copper. Could be an important defense against copper in the periplasm and may protect not only c type cytochromes but also other proteins with cysteine residues from copper ions that may catalyze nonnative disulfide bond formation. In Rubrivivax gelatinosus (Rhodocyclus gelatinosus), this protein is Copper-resistant cuproprotein CopI.